We begin with the raw amino-acid sequence, 423 residues long: F-box/LRR-repeat protein 2 (423 aa).

The F-box domain maps to 9-55 (GRINKKLPKELLLRIFSFLDIVTLCRCAQISKAWNILALDGSNWQRI). LRR repeat units lie at residues 61–87 (QTDV…SLRG), 88–113 (CIGV…NLNG), 114–139 (CTKI…DLTS), 140–165 (CVSI…NLSW), 166–191 (CDQI…LLRG), 192–217 (CTQL…NLQS), 218–243 (CSRI…CLSG), 244–269 (CSNL…EAAR), 270–295 (CSHL…DLEE), 296–321 (CILI…SLSH), 322–350 (CELI…ELDN), 351–375 (CLLI…ELYD), and 376–401 (CQQV…AYFA). Residues 80-90 (LRKLSLRGCIG) are interaction with Calmodulin. Residue K201 forms a Glycyl lysine isopeptide (Lys-Gly) (interchain with G-Cter in ubiquitin) linkage. T404 is subject to Phosphothreonine. C420 carries S-geranylgeranyl cysteine lipidation. Positions 420–423 (CVIL) match the CAAX motif motif.

As to quaternary structure, part of the SCF (SKP1-CUL1-F-box) E3 ubiquitin-protein ligase complex SCF(FBXL2) composed of CUL1, SKP1, RBX1 and FBXL2. Interacts with calmodulin; may antagonize substrate ubiquitination by SCF(FBXL2). May interact with PIK3R1. Interacts with PTPN13. Post-translationally, phosphorylated by GSK-beta (GSK3B), promoting recognition by FBXO3, leading to its ubiquitination by the SCF(FBXO3) complex. Ubiquitinated at Lys-201 by the SCF(FBXO3) complex in response to lipopolysaccharide (LPS), leading to its degradation by the proteasome.

It is found in the membrane. It functions in the pathway protein modification; protein ubiquitination. Its function is as follows. Calcium-activated substrate recognition component of the SCF (SKP1-cullin-F-box protein) E3 ubiquitin-protein ligase complex, SCF(FBXL2), which mediates the ubiquitination and subsequent proteasomal degradation of target proteins. Unlike many F-box proteins, FBXL2 does not seem to target phosphodegron within its substrates but rather calmodulin-binding motifs and is thereby antagonized by calmodulin. This is the case for the cyclins CCND2 and CCND3 which polyubiquitination and subsequent degradation are inhibited by calmodulin. Through CCND2 and CCND3 degradation induces cell-cycle arrest in G(0). SCF(FBXL2) also mediates PIK3R2 ubiquitination and proteasomal degradation thereby regulating phosphatidylinositol 3-kinase signaling and autophagy. PCYT1A monoubiquitination by SCF(FBXL2) and subsequent degradation regulates synthesis of phosphatidylcholine, which is utilized for formation of membranes and of pulmonary surfactant. The SCF(FBXL2) complex acts as a regulator of inflammation by mediating ubiquitination and degradation of TRAF proteins (TRAF1, TRAF2, TRAF3, TRAF4, TRAF5 and TRAF6). The SCF(FBXL2) complex acts as a negative regulator of the NLRP3 inflammasome by mediating ubiquitination and degradation of NLRP3. In Pongo abelii (Sumatran orangutan), this protein is F-box/LRR-repeat protein 2.